A 557-amino-acid polypeptide reads, in one-letter code: DNA mismatch repair protein MutL (557 aa).

Belongs to the DNA mismatch repair MutL/HexB family.

Its function is as follows. This protein is involved in the repair of mismatches in DNA. It is required for dam-dependent methyl-directed DNA mismatch repair. May act as a 'molecular matchmaker', a protein that promotes the formation of a stable complex between two or more DNA-binding proteins in an ATP-dependent manner without itself being part of a final effector complex. The sequence is that of DNA mismatch repair protein MutL from Methanothrix thermoacetophila (strain DSM 6194 / JCM 14653 / NBRC 101360 / PT) (Methanosaeta thermophila).